A 387-amino-acid polypeptide reads, in one-letter code: 3-ketoacyl-CoA thiolase (387 aa).

Cys-91 (acyl-thioester intermediate) is an active-site residue. Catalysis depends on proton acceptor residues His-343 and Cys-373.

It belongs to the thiolase-like superfamily. Thiolase family. As to quaternary structure, heterotetramer of two alpha chains (FadB) and two beta chains (FadA).

It localises to the cytoplasm. It catalyses the reaction an acyl-CoA + acetyl-CoA = a 3-oxoacyl-CoA + CoA. It participates in lipid metabolism; fatty acid beta-oxidation. Its function is as follows. Catalyzes the final step of fatty acid oxidation in which acetyl-CoA is released and the CoA ester of a fatty acid two carbons shorter is formed. The polypeptide is 3-ketoacyl-CoA thiolase (Aliivibrio fischeri (strain ATCC 700601 / ES114) (Vibrio fischeri)).